A 122-amino-acid chain; its full sequence is Large ribosomal subunit protein bL19 (122 aa).

Belongs to the bacterial ribosomal protein bL19 family.

In terms of biological role, this protein is located at the 30S-50S ribosomal subunit interface and may play a role in the structure and function of the aminoacyl-tRNA binding site. This is Large ribosomal subunit protein bL19 from Prosthecochloris aestuarii (strain DSM 271 / SK 413).